The following is a 178-amino-acid chain: Large ribosomal subunit protein uL6 (178 aa).

This sequence belongs to the universal ribosomal protein uL6 family. Part of the 50S ribosomal subunit.

This protein binds to the 23S rRNA, and is important in its secondary structure. It is located near the subunit interface in the base of the L7/L12 stalk, and near the tRNA binding site of the peptidyltransferase center. The protein is Large ribosomal subunit protein uL6 of Leuconostoc mesenteroides subsp. mesenteroides (strain ATCC 8293 / DSM 20343 / BCRC 11652 / CCM 1803 / JCM 6124 / NCDO 523 / NBRC 100496 / NCIMB 8023 / NCTC 12954 / NRRL B-1118 / 37Y).